We begin with the raw amino-acid sequence, 380 residues long: Probable dual-specificity RNA methyltransferase RlmN (380 aa).

Catalysis depends on Glu-112, which acts as the Proton acceptor. The Radical SAM core domain maps to 118–358 (YPDRVTACLS…TTVRDTRGRE (241 aa)). An intrachain disulfide couples Cys-125 to Cys-363. [4Fe-4S] cluster-binding residues include Cys-132, Cys-136, and Cys-139. S-adenosyl-L-methionine is bound by residues 187 to 188 (GE), Ser-221, 244 to 246 (SLH), and Asn-320. The S-methylcysteine intermediate role is filled by Cys-363.

It belongs to the radical SAM superfamily. RlmN family. [4Fe-4S] cluster serves as cofactor.

Its subcellular location is the cytoplasm. It catalyses the reaction adenosine(2503) in 23S rRNA + 2 reduced [2Fe-2S]-[ferredoxin] + 2 S-adenosyl-L-methionine = 2-methyladenosine(2503) in 23S rRNA + 5'-deoxyadenosine + L-methionine + 2 oxidized [2Fe-2S]-[ferredoxin] + S-adenosyl-L-homocysteine. It carries out the reaction adenosine(37) in tRNA + 2 reduced [2Fe-2S]-[ferredoxin] + 2 S-adenosyl-L-methionine = 2-methyladenosine(37) in tRNA + 5'-deoxyadenosine + L-methionine + 2 oxidized [2Fe-2S]-[ferredoxin] + S-adenosyl-L-homocysteine. Functionally, specifically methylates position 2 of adenine 2503 in 23S rRNA and position 2 of adenine 37 in tRNAs. This is Probable dual-specificity RNA methyltransferase RlmN from Salinispora arenicola (strain CNS-205).